Reading from the N-terminus, the 390-residue chain is Protein shisa-9 (390 aa).

Residues 1 to 22 form the signal peptide; sequence MTGIRAIFYYFLVDLLTLLCWA. The Extracellular portion of the chain corresponds to 23–134; sequence QGKGGQHFGS…DPSHDPTRDK (112 aa). 2 N-linked (GlcNAc...) asparagine glycosylation sites follow: Asn-40 and Asn-74. A helical transmembrane segment spans residues 135–155; the sequence is TNLIVYIICGVVAVMVLVGIF. Residues 156–390 lie on the Cytoplasmic side of the membrane; it reads TKLGLEKAHR…VTNSKTEVTV (235 aa).

Belongs to the shisa family. SHISA9 subfamily. As to quaternary structure, component of some AMPA receptors (ionotropic glutamate receptors) complex.

It localises to the cell projection. The protein resides in the dendritic spine membrane. It is found in the synapse. Functionally, regulator of short-term neuronal synaptic plasticity in the dentate gyrus. Associates with AMPA receptors (ionotropic glutamate receptors) in synaptic spines and promotes AMPA receptor desensitization at excitatory synapses. The polypeptide is Protein shisa-9 (shisa9) (Xenopus tropicalis (Western clawed frog)).